A 448-amino-acid chain; its full sequence is Deoxyguanosinetriphosphate triphosphohydrolase-like protein (448 aa).

The 194-residue stretch at 67–260 (RLTHSLEVSQ…MELADDIAYG (194 aa)) folds into the HD domain.

Belongs to the dGTPase family. Type 2 subfamily.

This Aliivibrio fischeri (strain MJ11) (Vibrio fischeri) protein is Deoxyguanosinetriphosphate triphosphohydrolase-like protein.